Reading from the N-terminus, the 612-residue chain is Probable translation initiation factor IF-2 (612 aa).

One can recognise a tr-type G domain in the interval 11–229 (LRQPIVVVLG…VLAGLTQRYL (219 aa)). The G1 stretch occupies residues 20–27 (GHVDHGKT). 20–27 (GHVDHGKT) is a binding site for GTP. The G2 stretch occupies residues 45–49 (LITQH). A G3 region spans residues 84–87 (DTPG). GTP is bound by residues 84–88 (DTPGH) and 138–141 (NKID). Positions 138 to 141 (NKID) are G4. The segment at 207–209 (SAK) is G5.

This sequence belongs to the TRAFAC class translation factor GTPase superfamily. Classic translation factor GTPase family. IF-2 subfamily.

In terms of biological role, function in general translation initiation by promoting the binding of the formylmethionine-tRNA to ribosomes. Seems to function along with eIF-2. This is Probable translation initiation factor IF-2 from Hyperthermus butylicus (strain DSM 5456 / JCM 9403 / PLM1-5).